Consider the following 606-residue polypeptide: Preterminal protein (606 aa).

The Nuclear localization signal signature appears at Arg-320 to Arg-329. Residue Ser-515 is modified to O-(5'-phospho-DNA)-serine. The tract at residues His-573–Phe-606 is disordered. Residues Pro-584 to Ala-600 are compositionally biased toward pro residues.

Belongs to the adenoviridae terminal protein family. Heterodimer with the polymerase; this heterodimer binds to bp 9 to 18 of the genome. Interacts with host POU2F1; POU2F1 binds to the auxiliary sequences in the inverted terminal repeats and tethers the pTP-POL heterodimer to the origin DNA thereby participating in the assembly of the pre-initiation complex (POL-TP-DBP-NFIA-POU2F1). In terms of processing, preterminal protein is used to replicate viral genome, upon genomic encapsidation it is processed first into iTP and finally into TP by adenovirus protease.

The protein resides in the host nucleus matrix. Protein covalently bound to the viral DNA that acts as a primer for viral genomic replication by DNA strand displacement. Assembles on the viral origin of replication in an initiation complex with viral polymerase, DBP, host NFIA and host POU2F1/OCT1. During initiation, the polymerase covalently couples the first dCTP with Ser-580 of pTP. The terminal protein stimulates the template activity over 20 fold compared to protein-free templates. Neo-synthesized viral genomes are linked to two preterminal proteins, one for each 5' end. These new genomes are encapsidated in the nucleus, and during capsid maturation by viral protease, preterminal protein is first cleaved into intermediary (iTP), then into mature TP. May play a role in host nuclear matrix localization of genomic DNA. The sequence is that of Preterminal protein from Human adenovirus A serotype 12 (HAdV-12).